We begin with the raw amino-acid sequence, 144 residues long: MKTFSAKPHEVRHEWFVVDATDKVLGRLAAAIAHRLRGKHKPIYTPHVDTGDYIVVINADKLRVTGNKAEDKKYYRHSGYPGGIYETTFKKMHERFPTRPLEKAVKGMLPKGPLGYAMIKKLKIYAGDTHPHAAQQPQPLEINA.

It belongs to the universal ribosomal protein uL13 family. In terms of assembly, part of the 50S ribosomal subunit.

Its function is as follows. This protein is one of the early assembly proteins of the 50S ribosomal subunit, although it is not seen to bind rRNA by itself. It is important during the early stages of 50S assembly. This Nitrosomonas europaea (strain ATCC 19718 / CIP 103999 / KCTC 2705 / NBRC 14298) protein is Large ribosomal subunit protein uL13.